An 876-amino-acid polypeptide reads, in one-letter code: Monofunctional isopimaradiene synthase, chloroplastic (876 aa).

Residues 1–64 (MAMPSYSSLS…YLRLGSRKII (64 aa)) constitute a chloroplast transit peptide. Mg(2+) is bound by residues D628, D632, N772, T776, and E780. Residues 628–632 (DDLYD) carry the DDXXD motif motif.

Belongs to the terpene synthase family. Tpsd subfamily. The cofactor is Mg(2+).

It is found in the plastid. It localises to the chloroplast. It carries out the reaction (+)-copalyl diphosphate = isopimara-7,15-diene + diphosphate. It participates in terpene metabolism; oleoresin biosynthesis. Involved in defensive oleoresin formation in conifers in response to insect attack or other injury. Involved in diterpene (C20) olefins biosynthesis. Monofunctional enzyme lacking the DXDD motif in the class II active site relevant for the cyclization of geranylgeranyl diphosphate (GGPP). Requires (+)-copalyl diphosphate ((+)-CPP) as substrate, but no activity with GGPP or ent-CPP. Isopimaradiene is the major products of the enzyme followed by sandaracopimaradiene. This chain is Monofunctional isopimaradiene synthase, chloroplastic, found in Pinus contorta (Shore pine).